Reading from the N-terminus, the 303-residue chain is Probable 5-dehydro-4-deoxyglucarate dehydratase (303 aa).

Belongs to the DapA family.

It carries out the reaction 5-dehydro-4-deoxy-D-glucarate + H(+) = 2,5-dioxopentanoate + CO2 + H2O. The protein operates within carbohydrate acid metabolism; D-glucarate degradation; 2,5-dioxopentanoate from D-glucarate: step 2/2. The protein is Probable 5-dehydro-4-deoxyglucarate dehydratase of Pseudomonas fluorescens (strain Pf0-1).